A 525-amino-acid chain; its full sequence is MAAQLNVEQLEVSLDGLTLSPDSEERPGAEGAPPQTPPSSAPGNGLGSGASGQQREPGEAAAEGAAEEARRMEQHWGFGLEELYGLALRFYKIKDGKAFHPTYEEKLKFVALHKQVLLGPYNPDTSPEVGFFDVLGNDRRREWAALGNMSKEDAMVEFVKLLNKCCPLLSAYVASHRIEKEEEEKRRKAEEERRQREEEERERLQKEEEKRKREKEDRLRREEEERRRIEEERLRLEQQKQQIMAALNSQTAVQFQQYAAQQYPGNYEQQQILIRQLQEQHYQQYMQQLYQVQLAQQQAALQKQQEVVMAGASLPASSKVNTAGASDTLSVNGQAKTHTENSEKVLEPEAAEEALENGPKDSLPVIAAPSMWTRPQIKDFKEKIRQDADSVITVRRGEVVTVRVPTHEEGSYLFWEFATDSYDIGFGVYFEWTDSPNAAVSVHVSESSDEEEEEEENVTCEEKAKKNANKPLLDEIVPVYRRDCHEEVYAGSHQYPGRGVYLLKFDNSYSLWRSKSVYYRVYYTR.

Ala2 is modified (N-acetylalanine). A disordered region spans residues 12–68; it reads VSLDGLTLSPDSEERPGAEGAPPQTPPSSAPGNGLGSGASGQQREPGEAAAEGAAEE. A Phosphoserine modification is found at Ser13. Thr18 bears the Phosphothreonine mark. Ser20 and Ser40 each carry phosphoserine. The span at 52–64 shows a compositional bias: low complexity; sequence GQQREPGEAAAEG. Residues 80–171 enclose the ACB domain; sequence LEELYGLALR…LNKCCPLLSA (92 aa). Positions 169-254 form a coiled coil; it reads LSAYVASHRI…AALNSQTAVQ (86 aa). The segment at 180 to 226 is disordered; the sequence is KEEEEKRRKAEEERRQREEEERERLQKEEEKRKREKEDRLRREEEER. Residues 238–305 are q domain; Interaction with PI4KB, TBC1D22A and TBC1D22B; it reads QQKQQIMAAL…QQQAALQKQQ (68 aa). The span at 319–336 shows a compositional bias: polar residues; it reads KVNTAGASDTLSVNGQAK. Positions 319-346 are disordered; that stretch reads KVNTAGASDTLSVNGQAKTHTENSEKVL. Residues 337–346 show a composition bias toward basic and acidic residues; it reads THTENSEKVL. One can recognise a GOLD domain in the interval 381–523; the sequence is KEKIRQDADS…SKSVYYRVYY (143 aa). Positions 448-470 form a coiled coil; the sequence is SDEEEEEEENVTCEEKAKKNANK.

Homodimer. Interacts with the C-terminal cytoplasmic domain of giantin/GOLGB1. Interacts with PBR and PKA regulatory subunit RI-alpha. Does not interact with PKA regulatory subunit RI-beta nor PKA regulatory subunit RII-alpha. Interacts (via Q domain) with PI4KB (via N-terminus). Interacts (via Q domain) with TBC1D22A and TBC1D22B; interactions with PI4KB and with TBC1D22A and TBC1D22B are mutually exclusive. Interacts with C10ORF76 and RAB11B. In terms of tissue distribution, expressed in brain (hippocampus, olfactory bulb, neuronal and glial cells of the cortex), eye, submaxillary gland, testis (interstitial and tubular compartments), ovary (granulosa cells, theca cells at late stages and primary follicles), adrenal gland (fasciculata and glomerulosa cells), heart, liver, and steroidogenic cell lines.

Its subcellular location is the golgi apparatus membrane. The protein resides in the mitochondrion. Involved in the maintenance of Golgi structure by interacting with giantin, affecting protein transport between the endoplasmic reticulum and Golgi. Involved in hormone-induced steroid biosynthesis in testicular Leydig cells. Recruits PI4KB to the Golgi apparatus membrane; enhances the enzyme activity of PI4KB activity via its membrane recruitment thereby increasing the local concentration of the substrate in the vicinity of the kinase. The sequence is that of Golgi resident protein GCP60 (Acbd3) from Mus musculus (Mouse).